Reading from the N-terminus, the 451-residue chain is Tryptophan--tRNA ligase (451 aa).

Residues 10–12 (TTT) and 18–19 (GN) contribute to the ATP site. The 'HIGH' region motif lies at 11-19 (TTGTPHLGN). An L-tryptophan-binding site is contributed by aspartate 143. ATP is bound by residues 155–157 (GRD), leucine 195, and 202–206 (KMSKS). A 'KMSKS' region motif is present at residues 202 to 206 (KMSKS).

The protein belongs to the class-I aminoacyl-tRNA synthetase family. Homodimer.

It localises to the cytoplasm. It catalyses the reaction tRNA(Trp) + L-tryptophan + ATP = L-tryptophyl-tRNA(Trp) + AMP + diphosphate + H(+). In terms of biological role, catalyzes the attachment of tryptophan to tRNA(Trp). The sequence is that of Tryptophan--tRNA ligase from Bordetella pertussis (strain Tohama I / ATCC BAA-589 / NCTC 13251).